The following is a 1093-amino-acid chain: Non-canonical non-ribosomal peptide synthetase ascB (1093 aa).

The span at 1 to 26 shows a compositional bias: low complexity; sequence MTVNGHHTNGVNGANGTNGHANGSNG. The disordered stretch occupies residues 1–27; the sequence is MTVNGHHTNGVNGANGTNGHANGSNGI. The segment at 35–392 is adenylation (A) domain; that stretch reads EIVPFVKPQV…LSLTFAPTDN (358 aa). Residues 591–678 form the Carrier domain; that stretch reads DNLEQNLKSL…EIAAALTKGS (88 aa). At S627 the chain carries O-(pantetheine 4'-phosphoryl)serine. The tract at residues 721-971 is thioester reductase (TR) domain; it reads LTGATGSLGS…IPVDDAASTV (251 aa).

Belongs to the NRP synthetase family.

The catalysed reaction is ilicicolinate B + AH2 + ATP = ilicicolin B + A + AMP + diphosphate. The protein operates within secondary metabolite biosynthesis; terpenoid biosynthesis. Non-canonical non-ribosomal peptide synthetase; part of the asc-1 gene cluster that mediates the biosynthesis of both ascochlorin and ascofuranone, a strong inhibitor of cyanide-insensitive alternative oxidases and a promising drug candidate against African trypanosomiasis. The first step in the pathway is performed by the non-reducing polyketide synthase ascC that produces orsellinic acid by condensing acetyl-CoA with 3 malonyl-CoA units. Orsellinic acid is then prenylated by the prenyltransferase ascA to yield ilicicolinic acid B. Ilicicolinic acid B is further reduced to ilicicolin B by the reductase ascB. The halogenase ascD then chlorinates ilicicolin B to produce ilicicolin A which is converted to ilicicolin A epoxide by the cytochrome P450 monooxygenase ascE that catalyzes stereoselective epoxidation of the terminal double bond of the prenyl group. Ilicicolin A epoxide is the last common precursor for the biosynthesis of ascofuranone and ascochlorin. The terpene cyclase ascF produces a monocyclic terpene, and the cyclization reaction is proposed to be initiated by protonation of the terminal epoxide of ilicicolin A epoxide to generate a monocyclic tertiarycation, which is followed by a series of hydride and methyl shifts with abstraction of proton, leading to the formation of the (14S,15R,19R)-trimethylcyclohexanone ring structure of ilicicolin C, which is finally reduced to ascochlorin by the dehydrogenase ascG. On the other hand, ilicicolin A epoxide is hydroxylated by the cytochrome P450 monooxygenase ascH, and the resultant product is cyclized by the terpene cyclase ascI to ascofuranol via protonation-initiated epoxide ring opening, which facilitates the 6-endo-tet cyclization to form the tetrahy-drofuran ring. Finally, ascofuranol is oxidized into ascofuranone by ascJ. The sequence is that of Non-canonical non-ribosomal peptide synthetase ascB from Acremonium egyptiacum (Oospora egyptiaca).